The primary structure comprises 210 residues: HTH-type transcriptional regulator MtrR (210 aa).

One can recognise an HTH tetR-type domain in the interval 9–69; sequence LKTKEHLMLA…ALFQRICDDI (61 aa). Positions 32 to 51 form a DNA-binding region, H-T-H motif; that stretch reads SLNEIAQAAGVTRGALYWHF.

As to quaternary structure, homodimer. Binds to DNA as a pair of dimers.

With respect to regulation, DNA binding is affected significantly by increasing the NaCl concentration. In terms of biological role, controls the permeability of the cell envelope to hydrophobic compounds such as antibiotics and detergents. Represses transcription of the mtrCDE-encoded efflux pump by binding within the mtrCDE promoter. Also negatively regulates the expression of farR, by binding to its promoter region, leading indirectly to the positive regulation of expression of the farAB-encoded efflux pump. The protein is HTH-type transcriptional regulator MtrR of Neisseria gonorrhoeae.